A 383-amino-acid chain; its full sequence is MSNHWLLPENIADVLPSEARKIEELRRRMLDLFRTYGYELVMPPMLEYLESLLTGTGHDLDLRTLKLVDQLSGRTMGLRADITPQVARIDAHLLNRPGVTRLCYAGNVLHARPAGFHATREPIQIGAEIYGHAGLEADIEIQDLMLAALQAAGLSDVRIDMCHAGILEALLAGLPSIRKIEDALFAALETKDVPALRELTVGMPQTERDALLALPTLYGGVDVIDRARATLPASPAIGRALDELAALAVQVRGASVNIDLSDLRGYHYHSGVMFAAYVAGLPNYVARGGRYDKVGEAFGRARPATGFSLDLREVAALSPVEVRAQAIFAPWDADPALRAAISALRAAGEIVIQSLPGHTHELDEFNCDRQLVRQDAGWAVVPR.

It belongs to the class-II aminoacyl-tRNA synthetase family. HisZ subfamily. In terms of assembly, heteromultimer composed of HisG and HisZ subunits.

The protein localises to the cytoplasm. The protein operates within amino-acid biosynthesis; L-histidine biosynthesis; L-histidine from 5-phospho-alpha-D-ribose 1-diphosphate: step 1/9. Required for the first step of histidine biosynthesis. May allow the feedback regulation of ATP phosphoribosyltransferase activity by histidine. The sequence is that of ATP phosphoribosyltransferase regulatory subunit from Cupriavidus necator (strain ATCC 17699 / DSM 428 / KCTC 22496 / NCIMB 10442 / H16 / Stanier 337) (Ralstonia eutropha).